The primary structure comprises 394 residues: DNA primase large subunit PriL (394 aa).

4 residues coordinate [4Fe-4S] cluster: C231, C340, C351, and C357.

The protein belongs to the eukaryotic-type primase large subunit family. In terms of assembly, heterodimer of a small subunit (PriS) and a large subunit (PriL). Requires [4Fe-4S] cluster as cofactor.

Its function is as follows. Regulatory subunit of DNA primase, an RNA polymerase that catalyzes the synthesis of short RNA molecules used as primers for DNA polymerase during DNA replication. Stabilizes and modulates the activity of the small subunit, increasing the rate of DNA synthesis, and conferring RNA synthesis capability. The DNA polymerase activity may enable DNA primase to also catalyze primer extension after primer synthesis. May also play a role in DNA repair. This is DNA primase large subunit PriL from Pyrococcus horikoshii (strain ATCC 700860 / DSM 12428 / JCM 9974 / NBRC 100139 / OT-3).